Consider the following 328-residue polypeptide: uncharacterized protein (328 aa).

The first 25 residues, Met-1 to Ala-25, serve as a signal peptide directing secretion.

This sequence belongs to the bacterial solute-binding protein 7 family.

Its subcellular location is the periplasm. This is an uncharacterized protein from Haemophilus influenzae (strain ATCC 51907 / DSM 11121 / KW20 / Rd).